Reading from the N-terminus, the 632-residue chain is Probable potassium transport system protein Kup (632 aa).

A run of 12 helical transmembrane segments spans residues 19 to 39 (LLCL…PLYV), 57 to 77 (VIGI…LKYV), 111 to 131 (ILFL…VITP), 147 to 167 (PLLQ…LFML), 175 to 195 (IGAL…LVGL), 213 to 233 (AFAF…AVVL), 257 to 277 (WYGG…ALLL), 286 to 306 (PFFL…ATAA), 347 to 367 (IYIP…VLGF), 376 to 396 (AYGV…FFVL), 404 to 424 (FLLG…FFSA), and 429 to 449 (VAQG…IMIT).

This sequence belongs to the HAK/KUP transporter (TC 2.A.72) family.

The protein localises to the cell inner membrane. The enzyme catalyses K(+)(in) + H(+)(in) = K(+)(out) + H(+)(out). Its function is as follows. Transport of potassium into the cell. Likely operates as a K(+):H(+) symporter. This is Probable potassium transport system protein Kup from Nitrosospira multiformis (strain ATCC 25196 / NCIMB 11849 / C 71).